A 233-amino-acid chain; its full sequence is Ribonuclease 3 (233 aa).

In terms of domain architecture, RNase III spans 7 to 136; the sequence is KQYLLSEFNI…FIGALYLDQG (130 aa). Glu49 is a binding site for Mg(2+). Asp53 is a catalytic residue. The Mg(2+) site is built by Asp122 and Glu125. The active site involves Glu125. In terms of domain architecture, DRBM spans 162–232; the sequence is DFKSRLQEKL…ARAALKLLEE (71 aa).

This sequence belongs to the ribonuclease III family. As to quaternary structure, homodimer. The cofactor is Mg(2+).

It is found in the cytoplasm. The catalysed reaction is Endonucleolytic cleavage to 5'-phosphomonoester.. In terms of biological role, digests double-stranded RNA. Involved in the processing of primary rRNA transcript to yield the immediate precursors to the large and small rRNAs (23S and 16S). Processes some mRNAs, and tRNAs when they are encoded in the rRNA operon. Processes pre-crRNA and tracrRNA of type II CRISPR loci if present in the organism. This Leuconostoc citreum (strain KM20) protein is Ribonuclease 3.